A 326-amino-acid polypeptide reads, in one-letter code: DNA-directed RNA polymerase subunit alpha (326 aa).

Positions 1 to 231 (MQTALLKPKI…DQLSVFAALE (231 aa)) are alpha N-terminal domain (alpha-NTD). Residues 247–326 (IDPILLRPVD…ENWPPAGLEK (80 aa)) are alpha C-terminal domain (alpha-CTD).

This sequence belongs to the RNA polymerase alpha chain family. Homodimer. The RNAP catalytic core consists of 2 alpha, 1 beta, 1 beta' and 1 omega subunit. When a sigma factor is associated with the core the holoenzyme is formed, which can initiate transcription.

The enzyme catalyses RNA(n) + a ribonucleoside 5'-triphosphate = RNA(n+1) + diphosphate. In terms of biological role, DNA-dependent RNA polymerase catalyzes the transcription of DNA into RNA using the four ribonucleoside triphosphates as substrates. This is DNA-directed RNA polymerase subunit alpha from Cupriavidus metallidurans (strain ATCC 43123 / DSM 2839 / NBRC 102507 / CH34) (Ralstonia metallidurans).